The following is a 270-amino-acid chain: Dihydroorotate dehydrogenase B (NAD(+)), catalytic subunit (270 aa).

FMN-binding positions include Ser-12 and 35-36; that span reads KT. Substrate is bound by residues Lys-35, 59 to 63, and Asn-114; that span reads NRIGL. Asn-114 lines the FMN pocket. Cys-117 acts as the Nucleophile in catalysis. 2 residues coordinate FMN: Lys-153 and Val-179. Substrate is bound at residue 180-181; it reads NT. Residues Gly-199, 226-227, and 248-249 contribute to the FMN site; these read GG and GS.

It belongs to the dihydroorotate dehydrogenase family. Type 1 subfamily. Heterotetramer of 2 PyrK and 2 PyrD type B subunits. FMN is required as a cofactor.

Its subcellular location is the cytoplasm. The catalysed reaction is (S)-dihydroorotate + NAD(+) = orotate + NADH + H(+). It participates in pyrimidine metabolism; UMP biosynthesis via de novo pathway; orotate from (S)-dihydroorotate (NAD(+) route): step 1/1. Functionally, catalyzes the conversion of dihydroorotate to orotate with NAD(+) as electron acceptor. The polypeptide is Dihydroorotate dehydrogenase B (NAD(+)), catalytic subunit (pyrD) (Thermotoga maritima (strain ATCC 43589 / DSM 3109 / JCM 10099 / NBRC 100826 / MSB8)).